Here is a 176-residue protein sequence, read N- to C-terminus: Ribosome maturation factor RimM (176 aa).

In terms of domain architecture, PRC barrel spans P100–L173.

The protein belongs to the RimM family. In terms of assembly, binds ribosomal protein uS19.

The protein resides in the cytoplasm. An accessory protein needed during the final step in the assembly of 30S ribosomal subunit, possibly for assembly of the head region. Essential for efficient processing of 16S rRNA. May be needed both before and after RbfA during the maturation of 16S rRNA. It has affinity for free ribosomal 30S subunits but not for 70S ribosomes. The protein is Ribosome maturation factor RimM of Prochlorococcus marinus (strain SARG / CCMP1375 / SS120).